Consider the following 155-residue polypeptide: S-ribosylhomocysteine lyase (155 aa).

Fe cation contacts are provided by His53, His57, and Cys121.

It belongs to the LuxS family. Homodimer. Fe cation serves as cofactor.

It catalyses the reaction S-(5-deoxy-D-ribos-5-yl)-L-homocysteine = (S)-4,5-dihydroxypentane-2,3-dione + L-homocysteine. In terms of biological role, involved in the synthesis of autoinducer 2 (AI-2) which is secreted by bacteria and is used to communicate both the cell density and the metabolic potential of the environment. The regulation of gene expression in response to changes in cell density is called quorum sensing. Catalyzes the transformation of S-ribosylhomocysteine (RHC) to homocysteine (HC) and 4,5-dihydroxy-2,3-pentadione (DPD). In Thermus thermophilus (strain ATCC BAA-163 / DSM 7039 / HB27), this protein is S-ribosylhomocysteine lyase.